The following is a 1099-amino-acid chain: Transmembrane protein 132D (1099 aa).

Residues 1–30 form the signal peptide; sequence MCPSEMGTLWHHWSPVLISLAALFSKVTEG. The Extracellular portion of the chain corresponds to 31–915; the sequence is RGILESIQRF…LMQASKGLSD (885 aa). A glycan (N-linked (GlcNAc...) asparagine) is linked at Asn505. A disordered region spans residues 797–858; the sequence is FGQNDANPNT…LMEGRGTTTD (62 aa). Residues 835–848 are compositionally biased toward low complexity; that stretch reads GSQEGQYYGSSSMG. The chain crosses the membrane as a helical span at residues 916-936; that stretch reads LEIGMYALLGVFCLAILVFLI. At 937–1099 the chain is on the cytoplasmic side; that stretch reads NCVTFALKYR…NYMERLHENV (163 aa).

The protein belongs to the TMEM132 family. As to quaternary structure, interacts (via C-terminus) with NCKAP. Expressed in mature oligodendrocytes. Detected in the brain, lung, pancreas and testis. Highly expressed in mature neurons of the adult nervous system.

It localises to the membrane. Functionally, regulate neuronals morphology via inhibition of the WAVE regulatory complex (WCR), a complex that controls F-actin cytoskeletal dynamics. The protein is Transmembrane protein 132D of Homo sapiens (Human).